The chain runs to 1022 residues: Sodium-dependent transporter snf-12 (1022 aa).

Over 1 to 165 the chain is Cytoplasmic; that stretch reads MNGEWKSALR…RRELWRTQKD (165 aa). The chain crosses the membrane as a helical span at residues 166-185; that stretch reads FFLSCLGFMVGVGHTMRFPA. At 186–192 the chain is on the extracellular side; the sequence is KVYQHGG. The chain crosses the membrane as a helical span at residues 193 to 213; sequence GVFFIPYLFSLIFFGLPLVFL. At 214–241 the chain is on the cytoplasmic side; sequence HLSLGQYTGQAANTAFQRLMPIGSGVGW. Residues 242 to 262 form a helical membrane-spanning segment; sequence ALVVIAIPVAVYYNIIVAWAI. Over 263 to 337 the chain is Extracellular; it reads HYFFQSAKGL…DFALGPLQSH (75 aa). Residues 338–358 form a helical membrane-spanning segment; sequence LVLSLAAAWLLVFFGVFKGLG. Residue Ser-359 is a topological domain, cytoplasmic. The chain crosses the membrane as a helical span at residues 360 to 380; it reads IAQTMNVTATVPYLLLSILLL. At 381–412 the chain is on the extracellular side; it reads RGISLPGANKGLTFLFTVDSTKLWKWQIWKSA. The helical transmembrane segment at 413–433 threads the bilayer; sequence AEQVFYELGIDAGPLISMAAF. Residues 434–444 are Cytoplasmic-facing; the sequence is SRYRNNIYRDS. Residues 445 to 465 form a helical membrane-spanning segment; sequence VLLVIMDALTSCLSGMVIFSF. The Extracellular segment spans residues 466 to 498; it reads VGFIASESNSNVNDVLKHDPLYLSFTVYPGVTS. Residues 499–519 form a helical membrane-spanning segment; sequence FMYWGGLWATLFFGMLVLAAI. Topologically, residues 520-550 are cytoplasmic; that stretch reads DAEFAWLEMIASAFMNHFSMKNKAVENRLLA. A helical membrane pass occupies residues 551 to 571; sequence FLCLAGFFLGLPLCAQGGIFV. Topologically, residues 572-584 are extracellular; sequence FHAIENLNANWNS. The helical transmembrane segment at 585–605 threads the bilayer; sequence FSLALLSVAIVCYVYGIDNYL. Over 606 to 641 the chain is Cytoplasmic; it reads TDISAMLRVPRIQISKATRLKEKLIYFFGPGGIYIK. The chain crosses the membrane as a helical span at residues 642-662; sequence FSLCFICPVILTVLLVASVLG. At 663-677 the chain is on the extracellular side; that stretch reads YQRISFAGRPIPIDY. The helical transmembrane segment at 678 to 698 threads the bilayer; sequence EIVAWIVMIGPLLVVPLVAFM. The Cytoplasmic portion of the chain corresponds to 699 to 1022; the sequence is QIRQIRNEGK…RPKPIDMPPK (324 aa). Disordered regions lie at residues 867-948 and 995-1022; these read RIPN…SSDD and IYDQ…MPPK. Residues 893–907 show a composition bias toward pro residues; that stretch reads SDPPVPTSPLPPPPK. Positions 933 to 943 are enriched in low complexity; sequence DDSPSISNSSD.

This sequence belongs to the sodium:neurotransmitter symporter (SNF) (TC 2.A.22) family. As to quaternary structure, may interact with STAT family transcription factor sta-2; the interaction is probably direct.

The protein localises to the membrane. It is found in the cytoplasm. Its subcellular location is the vesicle. In terms of biological role, probably mediates sodium-dependent uptake of unknown small molecule(s). By positively modulating expression, in the epidermis, of antimicrobial peptides such as nlp-29, plays a role in resistance to fungal infection and in the response to physical wounding and phorbol ester PMA treatment. Role in response to wounding of the epidermis may be facilitated by recruitment of snf-12 to the wound site by microtubule-dependent vesicle trafficking. Functions cell autonomously in the epidermis, in concert with STAT transcription factor sta-2, probably acting at vesicular membranes, downstream of a p38 MAPK/pmk-1 pathway. This chain is Sodium-dependent transporter snf-12, found in Caenorhabditis elegans.